A 209-amino-acid polypeptide reads, in one-letter code: Phosphoheptose isomerase (209 aa).

Residues 50 to 209 (IAETFRNGGK…ELVESMMGYA (160 aa)) form the SIS domain. Position 65-67 (65-67 (NGG)) interacts with substrate. Residues histidine 74 and glutamate 78 each coordinate Zn(2+). Residues glutamate 78, 109–110 (ND), 135–137 (STS), serine 140, and glutamine 188 each bind substrate. Zn(2+) is bound by residues glutamine 188 and histidine 196.

The protein belongs to the SIS family. GmhA subfamily. Zn(2+) is required as a cofactor.

It is found in the cytoplasm. It carries out the reaction 2 D-sedoheptulose 7-phosphate = D-glycero-alpha-D-manno-heptose 7-phosphate + D-glycero-beta-D-manno-heptose 7-phosphate. It participates in carbohydrate biosynthesis; D-glycero-D-manno-heptose 7-phosphate biosynthesis; D-glycero-alpha-D-manno-heptose 7-phosphate and D-glycero-beta-D-manno-heptose 7-phosphate from sedoheptulose 7-phosphate: step 1/1. Its function is as follows. Catalyzes the isomerization of sedoheptulose 7-phosphate in D-glycero-D-manno-heptose 7-phosphate. This chain is Phosphoheptose isomerase, found in Chlorobaculum parvum (strain DSM 263 / NCIMB 8327) (Chlorobium vibrioforme subsp. thiosulfatophilum).